Here is a 415-residue protein sequence, read N- to C-terminus: Erythronolide mycarosyltransferase (415 aa).

This sequence belongs to the glycosyltransferase 28 family.

It catalyses the reaction dTDP-beta-L-mycarose + erythronolide B = 3-O-alpha-L-mycarosylerythronolide B + dTDP + H(+). Functionally, involved in the biosynthesis of the macrolide antibiotic erythromycin. Catalyzes the reversible transfer of mycarosyl from dTDP-beta-L-mycarose to erythronolide B to yield 3-alpha-L-mycarosylerythronolide B. It can also use TDP-beta-L-cladinose. This chain is Erythronolide mycarosyltransferase, found in Saccharopolyspora erythraea (Streptomyces erythraeus).